Here is a 212-residue protein sequence, read N- to C-terminus: Probable GTP-binding protein EngB (212 aa).

The EngB-type G domain occupies 38–210; sequence SLPEIAFVGK…KASLAKCIKP (173 aa). GTP contacts are provided by residues 46–53, 73–77, 91–94, 158–161, and 189–191; these read GKSNVGKS, GRTRQ, DLPG, TKSD, and VSN. Mg(2+) contacts are provided by S53 and T75.

This sequence belongs to the TRAFAC class TrmE-Era-EngA-EngB-Septin-like GTPase superfamily. EngB GTPase family. Requires Mg(2+) as cofactor.

Necessary for normal cell division and for the maintenance of normal septation. The sequence is that of Probable GTP-binding protein EngB from Rickettsia conorii (strain ATCC VR-613 / Malish 7).